The chain runs to 322 residues: Homoserine kinase (322 aa).

ATP is bound at residue 107 to 117 (PLSSGMGGSAA).

This sequence belongs to the GHMP kinase family. Homoserine kinase subfamily.

It is found in the cytoplasm. The catalysed reaction is L-homoserine + ATP = O-phospho-L-homoserine + ADP + H(+). It functions in the pathway amino-acid biosynthesis; L-threonine biosynthesis; L-threonine from L-aspartate: step 4/5. Its function is as follows. Catalyzes the ATP-dependent phosphorylation of L-homoserine to L-homoserine phosphate. This is Homoserine kinase from Xylella fastidiosa (strain 9a5c).